A 430-amino-acid chain; its full sequence is 4-hydroxy-3-methylbut-2-en-1-yl diphosphate synthase (flavodoxin) (430 aa).

4 residues coordinate [4Fe-4S] cluster: Cys310, Cys313, Cys356, and Glu363.

The protein belongs to the IspG family. Requires [4Fe-4S] cluster as cofactor.

It catalyses the reaction (2E)-4-hydroxy-3-methylbut-2-enyl diphosphate + oxidized [flavodoxin] + H2O + 2 H(+) = 2-C-methyl-D-erythritol 2,4-cyclic diphosphate + reduced [flavodoxin]. It participates in isoprenoid biosynthesis; isopentenyl diphosphate biosynthesis via DXP pathway; isopentenyl diphosphate from 1-deoxy-D-xylulose 5-phosphate: step 5/6. In terms of biological role, converts 2C-methyl-D-erythritol 2,4-cyclodiphosphate (ME-2,4cPP) into 1-hydroxy-2-methyl-2-(E)-butenyl 4-diphosphate. In Nitrobacter winogradskyi (strain ATCC 25391 / DSM 10237 / CIP 104748 / NCIMB 11846 / Nb-255), this protein is 4-hydroxy-3-methylbut-2-en-1-yl diphosphate synthase (flavodoxin).